The primary structure comprises 208 residues: Ribosomal RNA large subunit methyltransferase E (208 aa).

Residues Gly63, Trp65, Asp83, Asp99, and Asp124 each coordinate S-adenosyl-L-methionine. Lys164 (proton acceptor) is an active-site residue.

This sequence belongs to the class I-like SAM-binding methyltransferase superfamily. RNA methyltransferase RlmE family.

The protein localises to the cytoplasm. It catalyses the reaction uridine(2552) in 23S rRNA + S-adenosyl-L-methionine = 2'-O-methyluridine(2552) in 23S rRNA + S-adenosyl-L-homocysteine + H(+). In terms of biological role, specifically methylates the uridine in position 2552 of 23S rRNA at the 2'-O position of the ribose in the fully assembled 50S ribosomal subunit. The polypeptide is Ribosomal RNA large subunit methyltransferase E (Alcanivorax borkumensis (strain ATCC 700651 / DSM 11573 / NCIMB 13689 / SK2)).